The following is a 213-amino-acid chain: Orotate phosphoribosyltransferase (213 aa).

Lys26 is a binding site for 5-phospho-alpha-D-ribose 1-diphosphate. Orotate is bound at residue 34–35; sequence FF. 5-phospho-alpha-D-ribose 1-diphosphate contacts are provided by residues 72 to 73, Arg99, Lys100, Lys103, His105, and 124 to 132; these read YK and DDVITAGTA. Orotate-binding residues include Thr128 and Arg156.

It belongs to the purine/pyrimidine phosphoribosyltransferase family. PyrE subfamily. Homodimer. It depends on Mg(2+) as a cofactor.

The catalysed reaction is orotidine 5'-phosphate + diphosphate = orotate + 5-phospho-alpha-D-ribose 1-diphosphate. The protein operates within pyrimidine metabolism; UMP biosynthesis via de novo pathway; UMP from orotate: step 1/2. Its function is as follows. Catalyzes the transfer of a ribosyl phosphate group from 5-phosphoribose 1-diphosphate to orotate, leading to the formation of orotidine monophosphate (OMP). The chain is Orotate phosphoribosyltransferase from Vibrio cholerae serotype O1 (strain ATCC 39315 / El Tor Inaba N16961).